Here is a 155-residue protein sequence, read N- to C-terminus: Regulatory protein RecX (155 aa).

Belongs to the RecX family.

Its subcellular location is the cytoplasm. In terms of biological role, modulates RecA activity. This chain is Regulatory protein RecX, found in Pseudomonas savastanoi pv. phaseolicola (strain 1448A / Race 6) (Pseudomonas syringae pv. phaseolicola (strain 1448A / Race 6)).